Reading from the N-terminus, the 205-residue chain is MNAVLQLEARTRETGSRASRRLRQAGFVPGIIYGPGVEPLAISVPTIQLERLVDRHGRGHLINAHVEGEANPRQVVIKQLQRDVLTAQVTHVDFLQVDIHRTITLTVPIAVVGEEQAKRRGLIVTHELAEVEIKCRPTEIPEAITLDISGVTEPGPVTVASLAAPPGVEVLEDPDTVVLSCTLGFGGVEEAEAEAEAGSSTGPAA.

The protein belongs to the bacterial ribosomal protein bL25 family. CTC subfamily. In terms of assembly, part of the 50S ribosomal subunit; part of the 5S rRNA/L5/L18/L25 subcomplex. Contacts the 5S rRNA. Binds to the 5S rRNA independently of L5 and L18.

Its function is as follows. This is one of the proteins that binds to the 5S RNA in the ribosome where it forms part of the central protuberance. The sequence is that of Large ribosomal subunit protein bL25A from Symbiobacterium thermophilum (strain DSM 24528 / JCM 14929 / IAM 14863 / T).